We begin with the raw amino-acid sequence, 122 residues long: Large ribosomal subunit protein uL14 (122 aa).

Belongs to the universal ribosomal protein uL14 family. In terms of assembly, part of the 50S ribosomal subunit. Forms a cluster with proteins L3 and L19. In the 70S ribosome, L14 and L19 interact and together make contacts with the 16S rRNA in bridges B5 and B8.

Its function is as follows. Binds to 23S rRNA. Forms part of two intersubunit bridges in the 70S ribosome. This Clostridium kluyveri (strain ATCC 8527 / DSM 555 / NBRC 12016 / NCIMB 10680 / K1) protein is Large ribosomal subunit protein uL14.